The primary structure comprises 447 residues: Multidrug efflux pump SdrM (447 aa).

The next 14 membrane-spanning stretches (helical) occupy residues 6-26 (IITV…SSII), 42-62 (LISL…PIVG), 70-90 (IIYV…MCGL), 94-114 (FTML…LMSL), 134-154 (IVGS…GGIL), 161-181 (WLFY…IWTF), 194-214 (FDTK…FALL), 217-237 (QLLL…MCLF), 260-280 (VFIT…YIPV), 286-306 (LGLS…AWIT), 323-342 (IYLL…SFGI), 346-363 (VLIA…GYIY), 392-412 (LGAS…SGIF), and 418-438 (NVLS…VVFF).

Belongs to the major facilitator superfamily.

It is found in the cell membrane. Its function is as follows. Energy-dependent drug efflux pump that increases resistance to antimicrobial agents such as norfloxacin, acriflavine and ethidium bromide. This Staphylococcus aureus (strain N315) protein is Multidrug efflux pump SdrM.